A 312-amino-acid chain; its full sequence is Ribonuclease Z (312 aa).

Histidine 63, histidine 65, aspartate 67, histidine 68, histidine 140, aspartate 211, and histidine 269 together coordinate Zn(2+). The active-site Proton acceptor is aspartate 67.

This sequence belongs to the RNase Z family. As to quaternary structure, homodimer. The cofactor is Zn(2+).

The catalysed reaction is Endonucleolytic cleavage of RNA, removing extra 3' nucleotides from tRNA precursor, generating 3' termini of tRNAs. A 3'-hydroxy group is left at the tRNA terminus and a 5'-phosphoryl group is left at the trailer molecule.. Its function is as follows. Zinc phosphodiesterase, which displays some tRNA 3'-processing endonuclease activity. Probably involved in tRNA maturation, by removing a 3'-trailer from precursor tRNA. The polypeptide is Ribonuclease Z (Shouchella clausii (strain KSM-K16) (Alkalihalobacillus clausii)).